We begin with the raw amino-acid sequence, 150 residues long: uncharacterized protein (150 aa).

Belongs to the OsmC/Ohr family.

This is an uncharacterized protein from Bacillus subtilis (strain 168).